The following is a 347-amino-acid chain: NADH-quinone oxidoreductase subunit H (347 aa).

8 helical membrane-spanning segments follow: residues 21–41 (IAGI…IIYA), 87–107 (GLFL…WAVI), 120–140 (VGLL…VIAG), 160–180 (ISYE…AGTF), 194–214 (WIIN…MFLI), 259–279 (LLMC…PLDI), 282–302 (LYLV…FFIF), and 324–344 (VFLP…MATG).

Belongs to the complex I subunit 1 family. NDH-1 is composed of 14 different subunits. Subunits NuoA, H, J, K, L, M, N constitute the membrane sector of the complex.

Its subcellular location is the cell inner membrane. It catalyses the reaction a quinone + NADH + 5 H(+)(in) = a quinol + NAD(+) + 4 H(+)(out). In terms of biological role, NDH-1 shuttles electrons from NADH, via FMN and iron-sulfur (Fe-S) centers, to quinones in the respiratory chain. The immediate electron acceptor for the enzyme in this species is believed to be ubiquinone. Couples the redox reaction to proton translocation (for every two electrons transferred, four hydrogen ions are translocated across the cytoplasmic membrane), and thus conserves the redox energy in a proton gradient. This subunit may bind ubiquinone. The protein is NADH-quinone oxidoreductase subunit H of Novosphingobium aromaticivorans (strain ATCC 700278 / DSM 12444 / CCUG 56034 / CIP 105152 / NBRC 16084 / F199).